The sequence spans 189 residues: 3-isopropylmalate dehydratase small subunit (189 aa).

It belongs to the LeuD family. LeuD type 1 subfamily. Heterodimer of LeuC and LeuD.

The enzyme catalyses (2R,3S)-3-isopropylmalate = (2S)-2-isopropylmalate. It participates in amino-acid biosynthesis; L-leucine biosynthesis; L-leucine from 3-methyl-2-oxobutanoate: step 2/4. Functionally, catalyzes the isomerization between 2-isopropylmalate and 3-isopropylmalate, via the formation of 2-isopropylmaleate. This chain is 3-isopropylmalate dehydratase small subunit, found in Francisella philomiragia subsp. philomiragia (strain ATCC 25017 / CCUG 19701 / FSC 153 / O#319-036).